Consider the following 308-residue polypeptide: Ribosomal protein L11 methyltransferase (308 aa).

Residues T160, G181, D203, and N245 each contribute to the S-adenosyl-L-methionine site.

The protein belongs to the methyltransferase superfamily. PrmA family.

Its subcellular location is the cytoplasm. The enzyme catalyses L-lysyl-[protein] + 3 S-adenosyl-L-methionine = N(6),N(6),N(6)-trimethyl-L-lysyl-[protein] + 3 S-adenosyl-L-homocysteine + 3 H(+). In terms of biological role, methylates ribosomal protein L11. This chain is Ribosomal protein L11 methyltransferase, found in Thermoanaerobacter pseudethanolicus (strain ATCC 33223 / 39E) (Clostridium thermohydrosulfuricum).